The sequence spans 196 residues: MSYYAFEGLIPVVHPTAFVHPSAVLIGDVIVGAGVYIGPLASLRGDYGRLIVQAGANIQDGCIMHGYCDTDTIVGENGHIGHGAILHGCVIGRDALVGMNSVIMDGAVIGEESIVAAMSFVKAGFRGEKRQLLMGTPARAVRSVSDDELHWKRLNTKEYQDLVGRCHAALHETQPLRQMEENRPRLQGTTDVTPKR.

Positions 173–196 (TQPLRQMEENRPRLQGTTDVTPKR) are disordered. Residues 187–196 (QGTTDVTPKR) are compositionally biased toward polar residues.

This sequence belongs to the transferase hexapeptide repeat family.

It participates in amine and polyamine metabolism; carnitine metabolism. Overproduction of CaiE stimulates the activity of CaiB and CaiD. This is Carnitine operon protein CaiE from Escherichia coli O6:K15:H31 (strain 536 / UPEC).